Here is a 140-residue protein sequence, read N- to C-terminus: ATP synthase epsilon chain (140 aa).

It belongs to the ATPase epsilon chain family. As to quaternary structure, F-type ATPases have 2 components, CF(1) - the catalytic core - and CF(0) - the membrane proton channel. CF(1) has five subunits: alpha(3), beta(3), gamma(1), delta(1), epsilon(1). CF(0) has three main subunits: a, b and c.

It is found in the cell inner membrane. Functionally, produces ATP from ADP in the presence of a proton gradient across the membrane. In Legionella pneumophila (strain Paris), this protein is ATP synthase epsilon chain.